The primary structure comprises 206 residues: Dephospho-CoA kinase (206 aa).

Residues 4–204 (VIGLTGGIAS…EGYIESHSED (201 aa)) enclose the DPCK domain. 12–17 (ASGKST) lines the ATP pocket.

It belongs to the CoaE family.

Its subcellular location is the cytoplasm. It carries out the reaction 3'-dephospho-CoA + ATP = ADP + CoA + H(+). It participates in cofactor biosynthesis; coenzyme A biosynthesis; CoA from (R)-pantothenate: step 5/5. Catalyzes the phosphorylation of the 3'-hydroxyl group of dephosphocoenzyme A to form coenzyme A. The polypeptide is Dephospho-CoA kinase (Staphylococcus saprophyticus subsp. saprophyticus (strain ATCC 15305 / DSM 20229 / NCIMB 8711 / NCTC 7292 / S-41)).